The chain runs to 342 residues: P2Y purinoceptor 12 (342 aa).

Over 1-27 (MQAIDNLTSAPGNTSLCTRDYKITQVL) the chain is Extracellular. Asn6 and Asn13 each carry an N-linked (GlcNAc...) asparagine glycan. 2 disulfide bridges follow: Cys17/Cys270 and Cys97/Cys175. The chain crosses the membrane as a helical span at residues 28 to 50 (FPLLYTVLFFVGLITNSLAMRIF). At 51-61 (FQIRSKSNFII) the chain is on the cytoplasmic side. A phosphoserine mark is found at Ser55 and Ser57. A helical transmembrane segment spans residues 62–82 (FLKNTVISDLLMILTFPFKIL). Residues 83 to 97 (SDAKLGAGPLRTFVC) lie on the Extracellular side of the membrane. Positions 93, 97, and 105 each coordinate ADP. A helical transmembrane segment spans residues 98–118 (QVTSVIFYFTMYISISFLGLI). The Cytoplasmic portion of the chain corresponds to 119–142 (TIDRYQKTTRPFKTSNPKNLLGAK). Residues 143 to 162 (ILSVLIWAFMFLLSLPNMIL) form a helical membrane-spanning segment. ADP contacts are provided by residues 156–159 (SLPN), 175–179 (CSFLK), His187, and Asn191. Residues 163–185 (TNRRPRDKNVKKCSFLKSEFGLV) lie on the Extracellular side of the membrane. Residues 186–207 (WHEIVNYICQVIFWINFLIVIV) form a helical membrane-spanning segment. Residues 208–233 (CYTLITKELYRSYVRTRGVGKVPRKK) lie on the Cytoplasmic side of the membrane. Residues 234 to 259 (VNVKVFIIIAVFFICFVPFHFARIPY) form a helical membrane-spanning segment. ADP contacts are provided by residues 256-259 (RIPY), Gln263, and Lys280. Topologically, residues 260-278 (TLSQTRDVFDCAAENTLFY) are extracellular. The helical transmembrane segment at 279-298 (VKESTLWLTSLNACLDPFIY) threads the bilayer. Topologically, residues 299-342 (FFLCKSFRNSLISMLKCPNSATSQSQDNRKKEQDGGDPNEETPM) are cytoplasmic. The tract at residues 317 to 342 (NSATSQSQDNRKKEQDGGDPNEETPM) is disordered. The span at 333–342 (GGDPNEETPM) shows a compositional bias: acidic residues.

The protein belongs to the G-protein coupled receptor 1 family.

Its subcellular location is the cell membrane. Functionally, receptor for ADP and ATP coupled to G-proteins that inhibit the adenylyl cyclase second messenger system. Required for normal platelet aggregation and blood coagulation. This chain is P2Y purinoceptor 12 (P2RY12), found in Macaca fascicularis (Crab-eating macaque).